Consider the following 459-residue polypeptide: Alcohol acyl transferase 1 allele GSd (459 aa).

Residues His-164 and Asn-385 each act as proton acceptor in the active site.

This sequence belongs to the plant acyltransferase family. In terms of tissue distribution, expressed at very low levels in the cortex and skin of ripe fruit.

Functionally, involved in the biosynthesis of volatile esters which confer ripe apple fruit flavor. Alcohol acyl transferase that can use a wide range of alcohols as substrate to produce esters. In Malus domestica (Apple), this protein is Alcohol acyl transferase 1 allele GSd.